An 817-amino-acid polypeptide reads, in one-letter code: U3 small nucleolar RNA-associated protein 13 (817 aa).

WD repeat units lie at residues 59-100 (EDEQ…RSMK), 102-139 (SSPS…ITHS), 142-187 (GHGG…HTLQ), 191-233 (SAVR…KCKL), 238-280 (PVNQ…VLKR), 386-425 (GHED…CKFD), 432-476 (GHSA…ASMD), 489-528 (AHEK…LEAT), 531-572 (NHKR…KTLE), 573-614 (GHTN…KTLD), 616-654 (HNNR…EIEE), and 664-705 (EQEQ…LGES).

In terms of assembly, interacts with snoRNA U3. Interacts with MPP10. Component of the ribosomal small subunit (SSU) processome composed of at least 40 protein subunits and snoRNA U3.

The protein resides in the nucleus. The protein localises to the nucleolus. Involved in nucleolar processing of pre-18S ribosomal RNA. The chain is U3 small nucleolar RNA-associated protein 13 (UTP13) from Saccharomyces cerevisiae (strain ATCC 204508 / S288c) (Baker's yeast).